The primary structure comprises 84 residues: Large ribosomal subunit protein bL27 (84 aa).

Belongs to the bacterial ribosomal protein bL27 family.

In Campylobacter lari (strain RM2100 / D67 / ATCC BAA-1060), this protein is Large ribosomal subunit protein bL27.